The chain runs to 815 residues: MRAGGCTVEQALTADAANVVKQAMGLARRRGHAQVTPLHVASTMLSAPTGLLRTACLQSHTHPLQCRALELCFNVALNRLPTSTGSPMLGVPTSPFPSISNALGAAFKRAQAHQRRGSIESQQQPILAVKIEVEQLIISILDDPSVSRVMREAGFSSPQVKTKVEQAVSLEICSKTTSSSKPKEGKLLTPVRNEDVMNVINNLVDKKRRNFVIVGECLATIDGVVKTVMEKVDKKDVPEVLKDVKFITLSFSSFGQPSRADVERKLEELETLVKSCVGKGVILNLGDLNWFVESRTRGSSLYNNNDSYCVVEHMIMEIGKLACGLVMGDHGRFWLMGLATSQTYVRCKSGQPSLESLWCLTTLTIPATSNSLRLSLVSESELEVKKSENVSLQLQQSSDQLSFCEECSVKFESEARFLKSSNSNVTTVALPAWLQQYKKENQNSHTDSDSIKELVVKWNSICDSIHKRPSLKTLTLSSPTSSFSGSTQPSISTLHHLQTNGDWPVIETNTHRHHSVVHETSHLRLFIPEHDSEQKTELVCSNPNSTMNSEASSSDAMELEHASSRFKEMNAENLATLCAALESKVPWQKDLVPELAKTVLKCRSGSSTRKINGNEDKKEDTWMFFQGLDVDAKEKIARELAKLVFGSQDSFVSICLSSFSSTRSDSAEDLRNKRLRDEQSLSYIERFSEAVSLDPNRVILVEDIEQADYLSQVGFKRAVERGRVCNSSGEEASLKDAIVILSCERFRSRSRACSPPSNQKSDGSDQPEDKNVATCVALDLNLSIDSAYVCEEESCDEIGLLEAVDARFHFKCSST.

The Clp R domain maps to 8–171 (VEQALTADAA…TKVEQAVSLE (164 aa)). Repeat regions lie at residues 12–80 (LTAD…LNRL) and 99–171 (ISNA…VSLE). The disordered stretch occupies residues 750-769 (SRACSPPSNQKSDGSDQPED). Residues 778-782 (LDLNL) carry the EAR motif.

It belongs to the ClpA/ClpB family. In terms of assembly, interacts probably with TPL/TPR in an EAR-motif dependent manner. In terms of tissue distribution, expressed in roots and seedlings.

In terms of biological role, may function in a transcriptional corepressor complex. The chain is Protein SMAX1-LIKE 3 from Arabidopsis thaliana (Mouse-ear cress).